A 347-amino-acid chain; its full sequence is NADH-ubiquinone oxidoreductase chain 2 (347 aa).

10 consecutive transmembrane segments (helical) span residues 3-23 (PLTLIIIMFTLFMGTMITVFS), 59-79 (YFLTQATASMILMMAITLNIL), 95-115 (PVLITLALIIKLGMAPFHFWV), 127-147 (GLILLTWQKLAPLSILYQISP), 149-169 (INPTMMMSVAILSIMVGGWGG), 178-198 (ILAYSSIAHMGWMAAIITFNP), 200-220 (TMVLNLIIYILMTIPMFMMFM), 241-261 (VSTILITLMSLGGLPPLTGFI), 274-294 (GNIILPTAMAMLALLNLYFYM), and 325-345 (LITPLIILSTMLLPLTPALSV).

This sequence belongs to the complex I subunit 2 family. Core subunit of respiratory chain NADH dehydrogenase (Complex I) which is composed of 45 different subunits. Interacts with TMEM242.

The protein localises to the mitochondrion inner membrane. The catalysed reaction is a ubiquinone + NADH + 5 H(+)(in) = a ubiquinol + NAD(+) + 4 H(+)(out). Core subunit of the mitochondrial membrane respiratory chain NADH dehydrogenase (Complex I) which catalyzes electron transfer from NADH through the respiratory chain, using ubiquinone as an electron acceptor. Essential for the catalytic activity and assembly of complex I. This is NADH-ubiquinone oxidoreductase chain 2 from Oryctolagus cuniculus (Rabbit).